The primary structure comprises 416 residues: Enterobactin exporter EntS (416 aa).

Residues 1–21 (MNKQSWLLNLSLLKTHPAFRA) are Cytoplasmic-facing. The helical transmembrane segment at 22-42 (VFLARFISIVSLGLLGVAVPV) threads the bilayer. The Periplasmic portion of the chain corresponds to 43–55 (QIQMMTHSTWLVG). The chain crosses the membrane as a helical span at residues 56-76 (LSVTLTGGAMFVGLMVGGVLA). Over 77–83 (DRYERKK) the chain is Cytoplasmic. The helical transmembrane segment at 84-104 (VILLARGTCGIGFIGLCLNAL) threads the bilayer. The Periplasmic segment spans residues 105–109 (LPEPS). Residues 110–130 (LLAIYLLGLWDGFFASLGVTA) traverse the membrane as a helical segment. Residues 131-156 (LLAATPALVGRENLMQAGAITMLTVR) lie on the Cytoplasmic side of the membrane. A helical transmembrane segment spans residues 157-177 (LGSVISPMIGGLLLATGGVAW). Position 178 (asparagine 178) is a topological domain, periplasmic. The helical transmembrane segment at 179–199 (YGLAAAGTFITLLPLLSLPAL) threads the bilayer. The Cytoplasmic segment spans residues 200 to 218 (PPPPQPREHPLKSLLAGFR). The helical transmembrane segment at 219 to 239 (FLLASPLVGGIALLGGLLTMA) threads the bilayer. Residues 240-256 (SAVRVLYPALADNWQMS) lie on the Periplasmic side of the membrane. Residues 257–277 (AAEIGFLYAAIPLGAAIGALT) form a helical membrane-spanning segment. The Cytoplasmic portion of the chain corresponds to 278 to 287 (SGKLAHSARP). Residues 288 to 307 (GLLMLLSTLGSFLAIGLFGL) form a helical membrane-spanning segment. Over 308–313 (MPMWIL) the chain is Periplasmic. The chain crosses the membrane as a helical span at residues 314 to 336 (GVVCLALFGWLSAVSSLLQYTML). Over 337-356 (QTQTPEAMLGRINGLWTAQN) the chain is Cytoplasmic. Residues 357 to 377 (VTGDAIGAALLGGLGAMMTPV) form a helical membrane-spanning segment. Position 378 (alanine 378) is a topological domain, periplasmic. A helical transmembrane segment spans residues 379-399 (SASASGFGLLIIGVLLLLVLV). The Cytoplasmic segment spans residues 400 to 416 (ELRRFRQTPPQVTASDS).

The protein belongs to the major facilitator superfamily. EntS (TC 2.A.1.38) family.

It localises to the cell inner membrane. Functionally, component of an export pathway for enterobactin. The sequence is that of Enterobactin exporter EntS from Shigella boydii serotype 4 (strain Sb227).